A 235-amino-acid polypeptide reads, in one-letter code: Phosphoribosylaminoimidazole-succinocarboxamide synthase (235 aa).

It belongs to the SAICAR synthetase family.

The enzyme catalyses 5-amino-1-(5-phospho-D-ribosyl)imidazole-4-carboxylate + L-aspartate + ATP = (2S)-2-[5-amino-1-(5-phospho-beta-D-ribosyl)imidazole-4-carboxamido]succinate + ADP + phosphate + 2 H(+). The protein operates within purine metabolism; IMP biosynthesis via de novo pathway; 5-amino-1-(5-phospho-D-ribosyl)imidazole-4-carboxamide from 5-amino-1-(5-phospho-D-ribosyl)imidazole-4-carboxylate: step 1/2. This Nautilia profundicola (strain ATCC BAA-1463 / DSM 18972 / AmH) protein is Phosphoribosylaminoimidazole-succinocarboxamide synthase.